Reading from the N-terminus, the 253-residue chain is Ribosomal RNA small subunit methyltransferase G (253 aa).

S-adenosyl-L-methionine is bound by residues Gly-84, Leu-89, 136–137 (IE), and Arg-155.

Belongs to the methyltransferase superfamily. RNA methyltransferase RsmG family.

It localises to the cytoplasm. Specifically methylates the N7 position of a guanine in 16S rRNA. The protein is Ribosomal RNA small subunit methyltransferase G of Prochlorococcus marinus (strain SARG / CCMP1375 / SS120).